The primary structure comprises 607 residues: Siderophore iron transporter mirC (607 aa).

Helical transmembrane passes span 67-89 (LVIA…QTIM), 129-148 (VFGR…LGYI), 186-208 (SLLN…VWIG), 223-245 (WGYG…SLLL), 279-301 (IFGL…LAAN), 311-328 (IVAM…LPFW), 349-368 (TALA…YFSV), 388-410 (GRVT…ILIK), 417-436 (VYVT…MLLY), 446-468 (VLGT…QLGV), 481-503 (TAMF…GAVW), and 557-574 (LLVL…LSLL). Basic and acidic residues predominate over residues 584-593 (SESSDHDDAS). The tract at residues 584 to 607 (SESSDHDDASPRNGLGPGERAKRT) is disordered.

It belongs to the major facilitator superfamily.

The protein resides in the membrane. This Emericella nidulans (strain FGSC A4 / ATCC 38163 / CBS 112.46 / NRRL 194 / M139) (Aspergillus nidulans) protein is Siderophore iron transporter mirC (mirC).